The primary structure comprises 344 residues: MFVMFIVAEVDDEVCVKREVERAAGEVGVHVSLTPFQRREKAEKNLYVVTILGKDRVGIVRDITRAFLDFGINIERTSLTAREELISIEFLVDLGQRDAAEVRKRLRREAERLGLDIVMQPYSTFNREKRLIVFDMDSTLVEAEIIDELAKEAGVGDEVSKLTERAMRGEIGFKEALEERVRLLKGLPVEVLERIYSRIKLTEGAKELVRSLKEAGYKVAVVSGGFSYFTDRLKEELGLDYAFGNELEIENGRLTGRIKGRIIDASEKARIVEEIARKEGISPENVVAVGDGANDRLMIERAGLGIAFNAKEVLKDVADGSISKENLVGLASVLKLPAEFRKKV.

Positions 48-120 (VVTILGKDRV…ERLGLDIVMQ (73 aa)) constitute an ACT domain. The active-site Nucleophile is the D135. Positions 135 and 137 each coordinate Mg(2+). Residue D137 is the Proton donor of the active site. Substrate contacts are provided by residues E144, R180, 223–224 (SG), and K268. D291 is a binding site for Mg(2+).

This sequence belongs to the HAD-like hydrolase superfamily. SerB family. Mg(2+) serves as cofactor.

It catalyses the reaction O-phospho-L-serine + H2O = L-serine + phosphate. The catalysed reaction is O-phospho-D-serine + H2O = D-serine + phosphate. It participates in amino-acid biosynthesis; L-serine biosynthesis; L-serine from 3-phospho-D-glycerate: step 3/3. In Archaeoglobus fulgidus (strain ATCC 49558 / DSM 4304 / JCM 9628 / NBRC 100126 / VC-16), this protein is Phosphoserine phosphatase.